The chain runs to 132 residues: Translation initiation factor 5A (132 aa).

Lys36 carries the hypusine modification.

Belongs to the eIF-5A family.

It is found in the cytoplasm. Functionally, functions by promoting the formation of the first peptide bond. The sequence is that of Translation initiation factor 5A (eIF5A) from Pyrobaculum neutrophilum (strain DSM 2338 / JCM 9278 / NBRC 100436 / V24Sta) (Thermoproteus neutrophilus).